The primary structure comprises 79 residues: Small ribosomal subunit protein bS18 (79 aa).

The protein belongs to the bacterial ribosomal protein bS18 family. Part of the 30S ribosomal subunit. Forms a tight heterodimer with protein bS6.

Its function is as follows. Binds as a heterodimer with protein bS6 to the central domain of the 16S rRNA, where it helps stabilize the platform of the 30S subunit. In Streptococcus thermophilus (strain CNRZ 1066), this protein is Small ribosomal subunit protein bS18.